A 556-amino-acid polypeptide reads, in one-letter code: Carotenoid-cleaving dioxygenase, mitochondrial (556 aa).

Fe cation is bound by residues H203, H263, H334, and H550.

Belongs to the carotenoid oxygenase family. The cofactor is Fe(2+).

Its subcellular location is the mitochondrion. It catalyses the reaction all-trans-beta-carotene + O2 = beta-ionone + all-trans-10'-apo-beta-carotenal. It carries out the reaction 5-cis-lycopene + O2 = 5-cis-10'-apo-lycopenal + (3E,5E)-6,10-dimethylundeca-3,5,9-trien-2-one. The catalysed reaction is 13-cis-lycopene + O2 = 13-cis-10'-apo-lycopenal + (3E,5E)-6,10-dimethylundeca-3,5,9-trien-2-one. The enzyme catalyses lutein + O2 = (3R,6R)-hydroxy-alpha-ionone + (3R)-3-hydroxy-10'-apo-beta-carotenal. It catalyses the reaction lutein + O2 = (3R,6R)-3-hydroxy-10'-apo-alpha-carotenal + (3R)-hydroxy-beta-ionone. It carries out the reaction all-trans-zeaxanthin + 2 O2 = 4,9-dimethyldodeca-2,4,6,8,10-pentaenedial + 2 (3R)-hydroxy-beta-ionone. The catalysed reaction is all-trans-zeaxanthin + O2 = (3R)-3-hydroxy-10'-apo-beta-carotenal + (3R)-hydroxy-beta-ionone. The enzyme catalyses beta-cryptoxanthin + O2 = all-trans-10'-apo-beta-carotenal + (3R)-hydroxy-beta-ionone. It catalyses the reaction all-trans-10'-apo-beta-carotenal + O2 = beta-ionone + 4,9-dimethyldodeca-2,4,6,8,10-pentaenedial. It carries out the reaction (3R)-3-hydroxy-10'-apo-beta-carotenal + O2 = 4,9-dimethyldodeca-2,4,6,8,10-pentaenedial + (3R)-hydroxy-beta-ionone. The catalysed reaction is (3R,6R)-3-hydroxy-10'-apo-alpha-carotenal + O2 = (3R,6R)-hydroxy-alpha-ionone + 4,9-dimethyldodeca-2,4,6,8,10-pentaenedial. In terms of biological role, broad specificity mitochondrial dioxygenase that mediates the asymmetric oxidative cleavage of carotenoids. Cleaves carotenes (pure hydrocarbon carotenoids) such as all-trans-beta-carotene and lycopene as well as xanthophylls (oxygenated carotenoids) such as zeaxanthin, lutein and beta-cryptoxanthin at both the 9,10 and the 9',10' carbon-carbon double bond. Through its function in carotenoids metabolism regulates oxidative stress and the production of important signaling molecules. The sequence is that of Carotenoid-cleaving dioxygenase, mitochondrial from Macaca fascicularis (Crab-eating macaque).